A 348-amino-acid polypeptide reads, in one-letter code: MTSDFSPEPPMELCYENVNGSCIKSSYAPWPRAILYGVLGLGALLAVFGNLLVIIAILHFKQLHTPTNFLVASLACADFLVGVTVMPFSTVRSVESCWYFGESYCKFHTCFDTSFCFASLFHLCCISIDRYIAVTDPLTYPTKFTVSVSGLCIALSWFFSVTYSFSIFYTGANEEGIEELVVALTCVGGCQAPLNQNWVLLCFLLFFLPTVVMVFLYGRIFLVAKYQARKIEGTANQAQASSESYKERVAKRERKAAKTLGIAMAAFLVSWLPYIIDAVIDAYMNFITPAYVYEILVWCVYYNSAMNPLIYAFFYPWFRKAIKLIVSGKVFRADSSTTNLFSEEAGAG.

Residues 1–33 (MTSDFSPEPPMELCYENVNGSCIKSSYAPWPRA) are Extracellular-facing. N-linked (GlcNAc...) asparagine glycosylation occurs at asparagine 19. Disulfide bonds link cysteine 22–cysteine 186 and cysteine 105–cysteine 190. The chain crosses the membrane as a helical span at residues 34-58 (ILYGVLGLGALLAVFGNLLVIIAIL). Topologically, residues 59–68 (HFKQLHTPTN) are cytoplasmic. Residues 69–90 (FLVASLACADFLVGVTVMPFST) form a helical membrane-spanning segment. The Extracellular segment spans residues 91 to 105 (VRSVESCWYFGESYC). The helical transmembrane segment at 106–128 (KFHTCFDTSFCFASLFHLCCISI) threads the bilayer. 2 residues coordinate spermidine: aspartate 112 and threonine 113. Over 129 to 148 (DRYIAVTDPLTYPTKFTVSV) the chain is Cytoplasmic. A helical transmembrane segment spans residues 149-170 (SGLCIALSWFFSVTYSFSIFYT). Over 171 to 196 (GANEEGIEELVVALTCVGGCQAPLNQ) the chain is Extracellular. The tract at residues 174-187 (EEGIEELVVALTCV) is extracellular Loop 2 (ECL2). The chain crosses the membrane as a helical span at residues 197–218 (NWVLLCFLLFFLPTVVMVFLYG). Topologically, residues 219 to 256 (RIFLVAKYQARKIEGTANQAQASSESYKERVAKRERKA) are cytoplasmic. A helical membrane pass occupies residues 257–280 (AKTLGIAMAAFLVSWLPYIIDAVI). Residues 281-293 (DAYMNFITPAYVY) lie on the Extracellular side of the membrane. The helical transmembrane segment at 294 to 314 (EILVWCVYYNSAMNPLIYAFF) threads the bilayer. The Cytoplasmic portion of the chain corresponds to 315-348 (YPWFRKAIKLIVSGKVFRADSSTTNLFSEEAGAG).

The protein belongs to the G-protein coupled receptor 1 family. In terms of tissue distribution, specifically expressed in neurons of the olfactory epithelium.

The protein localises to the cell membrane. Olfactory receptor specific for trace amines, such as triethylamine, N,N-dimethylcyclohexylamine (DMCHA), beta-phenylethylamine (beta-PEA), cadaverine (CAD) and polyamines such as spermine and spermidine. Trace amine compounds are enriched in animal body fluids and act on trace amine-associated receptors (TAARs) to elicit both intraspecific and interspecific innate behaviors. Trace amine-binding causes a conformation change that triggers signaling via G(s)-class of G alpha proteins (GNAL or GNAS). In mature olfactory sensory neurons, Taar9 is coupled with GNAL/G(olf)G alpha protein and mediates activation of adenylate cyclase activity to activate cAMP signaling and eventually transmit odorant signals to achieve membrane depolarization. In immature olfactory sensory neurons, Taar9 is coupled with GNAS/G(s) G alpha proteins. In Mus musculus (Mouse), this protein is Trace amine-associated receptor 9.